A 211-amino-acid polypeptide reads, in one-letter code: MTKSYNYKLTHFVTSAPDIRHLPVDSGIEIAFAGRSNAGKSSALNTLTNQKSLARTSKTPGRTRLINLFEVESGIRLVDLPGYGYAEVPEELKRKWQRALGEYLQMRDSLKGLVVLMDIRHPMKDLDQQMVQWAVDVNIPVLVLLTKADKLASGSRKEQLNQVREAALAFMGDVQVETFSSLKKQGVDKLRQKLDDWFAAIPPAQGSPETE.

An EngB-type G domain is found at 26–200 (SGIEIAFAGR…RQKLDDWFAA (175 aa)). Residues 34 to 41 (GRSNAGKS), 61 to 65 (GRTRL), 79 to 82 (DLPG), 146 to 149 (TKAD), and 179 to 181 (FSS) each bind GTP. Positions 41 and 63 each coordinate Mg(2+).

The protein belongs to the TRAFAC class TrmE-Era-EngA-EngB-Septin-like GTPase superfamily. EngB GTPase family. Mg(2+) serves as cofactor.

Necessary for normal cell division and for the maintenance of normal septation. The polypeptide is Probable GTP-binding protein EngB (Sodalis glossinidius (strain morsitans)).